Consider the following 371-residue polypeptide: Protein-tyrosine sulfotransferase 2 (371 aa).

Topologically, residues 1-8 are cytoplasmic; it reads MRVTMRRV. A helical; Signal-anchor for type II membrane protein transmembrane segment spans residues 9–25; that stretch reads LLAVGSVVALMVTLHLG. At 26–371 the chain is on the lumenal side; sequence QQVLECQHVL…QVTQNTSSSH (346 aa). 76 to 80 provides a ligand contact to 3'-phosphoadenylyl sulfate; sequence RSGTT. Cys-94 and Cys-154 are disulfide-bonded. The active-site Proton donor/acceptor is Glu-97. Positions 99–103 are interaction with peptide substrate; the sequence is RIIPR. Residues Arg-181, Ser-189, and Arg-193 each contribute to the 3'-phosphoadenylyl sulfate site. Cys-223 and Cys-231 form a disulfide bridge. Residues Tyr-236, 283-292, and Lys-298 each bind 3'-phosphoadenylyl sulfate; that span reads STDQVIKPVN. N-linked (GlcNAc...) asparagine glycans are attached at residues Asn-341 and Asn-366.

The protein belongs to the protein sulfotransferase family.

It is found in the golgi apparatus membrane. It carries out the reaction L-tyrosyl-[protein] + 3'-phosphoadenylyl sulfate = O-sulfo-L-tyrosine-[protein] + adenosine 3',5'-bisphosphate + H(+). Catalyzes the O-sulfation of tyrosine residues within acidic motifs of polypeptides, using 3'-phosphoadenylyl sulfate (PAPS) as cosubstrate. This chain is Protein-tyrosine sulfotransferase 2 (TPST2), found in Gallus gallus (Chicken).